The chain runs to 119 residues: Ribonuclease P protein component (119 aa).

Belongs to the RnpA family. As to quaternary structure, consists of a catalytic RNA component (M1 or rnpB) and a protein subunit.

It catalyses the reaction Endonucleolytic cleavage of RNA, removing 5'-extranucleotides from tRNA precursor.. RNaseP catalyzes the removal of the 5'-leader sequence from pre-tRNA to produce the mature 5'-terminus. It can also cleave other RNA substrates such as 4.5S RNA. The protein component plays an auxiliary but essential role in vivo by binding to the 5'-leader sequence and broadening the substrate specificity of the ribozyme. In Streptococcus mutans serotype c (strain ATCC 700610 / UA159), this protein is Ribonuclease P protein component.